The primary structure comprises 569 residues: Pyruvate decarboxylase (569 aa).

Pyruvate-binding residues include D38 and H124. Thiamine diphosphate-binding positions include T398 and 421 to 423 (GSI). Mg(2+) is bound at residue D451. Residues 452-453 (GS) and 478-483 (NEGYTI) contribute to the thiamine diphosphate site. Mg(2+)-binding residues include N478 and G480. A pyruvate-binding site is contributed by E484.

Belongs to the TPP enzyme family. In terms of assembly, homotetramer. Mg(2+) serves as cofactor. The cofactor is thiamine diphosphate.

The enzyme catalyses a 2-oxocarboxylate + H(+) = an aldehyde + CO2. It carries out the reaction pyruvate + H(+) = acetaldehyde + CO2. The protein is Pyruvate decarboxylase (pdcA) of Aspergillus fumigatus (strain ATCC MYA-4609 / CBS 101355 / FGSC A1100 / Af293) (Neosartorya fumigata).